Consider the following 273-residue polypeptide: Large ribosomal subunit protein uL2 (273 aa).

Positions 228–273 (VDHPHGGGEGKTSGGRHPVTPWGFPTKGKKTRKNKRTSKFIIKKRK) are disordered. Basic residues predominate over residues 254-273 (KGKKTRKNKRTSKFIIKKRK).

This sequence belongs to the universal ribosomal protein uL2 family. As to quaternary structure, part of the 50S ribosomal subunit. Forms a bridge to the 30S subunit in the 70S ribosome.

In terms of biological role, one of the primary rRNA binding proteins. Required for association of the 30S and 50S subunits to form the 70S ribosome, for tRNA binding and peptide bond formation. It has been suggested to have peptidyltransferase activity; this is somewhat controversial. Makes several contacts with the 16S rRNA in the 70S ribosome. The sequence is that of Large ribosomal subunit protein uL2 from Rickettsia bellii (strain OSU 85-389).